Reading from the N-terminus, the 20-residue chain is Phospholipase A2 D5 (20 aa).

Ca(2+) serves as cofactor. In terms of processing, contains seven disulfide bonds. Expressed by the venom gland.

The protein resides in the secreted. It catalyses the reaction a 1,2-diacyl-sn-glycero-3-phosphocholine + H2O = a 1-acyl-sn-glycero-3-phosphocholine + a fatty acid + H(+). Its function is as follows. PLA2 catalyzes the calcium-dependent hydrolysis of the 2-acyl groups in 3-sn-phosphoglycerides. This Micrurus pyrrhocryptus (Coral snake) protein is Phospholipase A2 D5.